Here is a 676-residue protein sequence, read N- to C-terminus: UvrABC system protein B (676 aa).

The 386-residue stretch at 39–424 (RGILDGIPSQ…RGHIIEQIIR (386 aa)) folds into the Helicase ATP-binding domain. 52 to 59 (GTTGSGKT) is an ATP binding site. Residues 105-128 (YYDYYQPEAYIARSDTYIEKSLLI) carry the Beta-hairpin motif. One can recognise a Helicase C-terminal domain in the interval 441 to 604 (QIDDLLEEIR…ITPKPIIKPI (164 aa)). The tract at residues 611–631 (KEGAQEDSRPETQSTEDLESS) is disordered. Residues 629–664 (ESSIKQYEEAMYKAAQDFQFDEAAKYRDLMNAAKRQ) enclose the UVR domain.

The protein belongs to the UvrB family. Forms a heterotetramer with UvrA during the search for lesions. Interacts with UvrC in an incision complex.

The protein resides in the cytoplasm. Its function is as follows. The UvrABC repair system catalyzes the recognition and processing of DNA lesions. A damage recognition complex composed of 2 UvrA and 2 UvrB subunits scans DNA for abnormalities. Upon binding of the UvrA(2)B(2) complex to a putative damaged site, the DNA wraps around one UvrB monomer. DNA wrap is dependent on ATP binding by UvrB and probably causes local melting of the DNA helix, facilitating insertion of UvrB beta-hairpin between the DNA strands. Then UvrB probes one DNA strand for the presence of a lesion. If a lesion is found the UvrA subunits dissociate and the UvrB-DNA preincision complex is formed. This complex is subsequently bound by UvrC and the second UvrB is released. If no lesion is found, the DNA wraps around the other UvrB subunit that will check the other stand for damage. This Chlamydia muridarum (strain MoPn / Nigg) protein is UvrABC system protein B.